A 160-amino-acid chain; its full sequence is Ribosomal RNA large subunit methyltransferase H (160 aa).

The S-adenosyl-L-methionine site is built by leucine 76 and glycine 108.

Belongs to the RNA methyltransferase RlmH family. In terms of assembly, homodimer.

It localises to the cytoplasm. The catalysed reaction is pseudouridine(1915) in 23S rRNA + S-adenosyl-L-methionine = N(3)-methylpseudouridine(1915) in 23S rRNA + S-adenosyl-L-homocysteine + H(+). In terms of biological role, specifically methylates the pseudouridine at position 1915 (m3Psi1915) in 23S rRNA. In Rhodopseudomonas palustris (strain TIE-1), this protein is Ribosomal RNA large subunit methyltransferase H.